A 349-amino-acid chain; its full sequence is Transmembrane protein 255A (349 aa).

A run of 4 helical transmembrane segments spans residues 30 to 50 (IYVTVTLLIVSVLILTVGLAA), 57 to 77 (VTVGGYYPGVILGFGSFLGII), 89 to 109 (LVASIVFISFGVIAAFCCAIV), and 226 to 246 (TILNIVGLFLGIITAAVLGGF). Residues 303–329 (PSSPPSGLSDEPQSASPSPSYMWSSSA) are disordered. Over residues 316 to 329 (SASPSPSYMWSSSA) the composition is skewed to low complexity.

This sequence belongs to the TMEM255 family.

It is found in the membrane. The polypeptide is Transmembrane protein 255A (TMEM255A) (Homo sapiens (Human)).